The primary structure comprises 287 residues: Probable endoribonuclease YicC (287 aa).

Belongs to the YicC/YloC family. A divalent metal cation serves as cofactor.

In terms of biological role, probably a ssRNA endonuclease. Functionally, might contribute to small RNA (sRNA) regulation. In Haemophilus influenzae (strain ATCC 51907 / DSM 11121 / KW20 / Rd), this protein is Probable endoribonuclease YicC.